We begin with the raw amino-acid sequence, 911 residues long: General transcription factor 3C polypeptide 2 (911 aa).

2 disordered regions span residues 34 to 187 and 205 to 297; these read LDVK…RRRA and ALPA…MAPN. Residues 35–46 show a composition bias toward polar residues; it reads DVKTSSEMTSAE. Serine 63 is subject to Phosphoserine. Residues 64–81 are compositionally biased toward basic and acidic residues; sequence PDQRRLPPEQESLSRLEQ. Positions 92–112 are enriched in basic residues; it reads SKPRASKPGRKRGGRTRKGPK. Residues 114 to 123 are compositionally biased toward pro residues; it reads PQQPNPPSAP. Residues serine 132, serine 165, serine 167, serine 220, and serine 260 each carry the phosphoserine modification. Residues 253–262 are compositionally biased toward acidic residues; that stretch reads EAEDVEESEG. Positions 263–275 are enriched in low complexity; it reads PSESSSEPEPAVP. WD repeat units follow at residues 465 to 521 and 552 to 593; these read CDNG…ALLA and SECG…PLQR. At serine 597 the chain carries Phosphoserine. The WD 3 repeat unit spans residues 611–651; sequence AHDQAVRTLQWCKANSHFLASAGSDRKIKFWDLRRPYEPIN. The segment at 765–785 is disordered; it reads SPEGPDHSSASSGVPNPPKAR. Residues 832-874 form a WD 4 repeat; sequence LQLEAIHKVRFSPNLDSYGWLVSGGQSGLVRIHFVRGLASPLG. Residues serine 871, serine 892, and serine 893 each carry the phosphoserine modification. The disordered stretch occupies residues 889 to 911; it reads FQPSSPTRRPGFSPTSHRLLPTP. Threonine 895 is modified (phosphothreonine). Serine 901 carries the phosphoserine modification.

As to quaternary structure, part of the TFIIIC subcomplex TFIIIC2, consisting of six subunits, GTF3C1, GTF3C2, GTF3C3, GTF3C4, GTF3C5 and GTF3C6.

Its subcellular location is the nucleus. Its function is as follows. Required for RNA polymerase III-mediated transcription. Component of TFIIIC that initiates transcription complex assembly on tRNA and is required for transcription of 5S rRNA and other stable nuclear and cytoplasmic RNAs. May play a direct role in stabilizing interactions of TFIIIC2 with TFIIIC1. The chain is General transcription factor 3C polypeptide 2 (GTF3C2) from Pongo abelii (Sumatran orangutan).